The primary structure comprises 674 residues: Probable copper-transporting P-type ATPase B (674 aa).

Residues 1-22 (MNHSNQMHHDNHASHDHHSGHA) form a disordered region. The segment covering 7–19 (MHHDNHASHDHHS) has biased composition (basic and acidic residues). 6 helical membrane passes run 32-52 (FFVS…MGVN), 57-77 (FTFP…FFYG), 95-115 (GMMT…LYAF), 127-147 (TMDF…GHWI), 284-304 (GYLF…WMLI), and 315-335 (LVTV…PLVT). Asp-367 acts as the 4-aspartylphosphate intermediate in catalysis. Mg(2+) is bound by residues Asp-565 and Asp-569. A run of 2 helical transmembrane segments spans residues 623 to 645 (LWWG…AFIG) and 649 to 671 (SPAI…AFTL).

The protein belongs to the cation transport ATPase (P-type) (TC 3.A.3) family. Type IB subfamily.

It is found in the cell membrane. The enzyme catalyses Cu(+)(in) + ATP + H2O = Cu(+)(out) + ADP + phosphate + H(+). Functionally, involved in copper transport. This chain is Probable copper-transporting P-type ATPase B (copB), found in Staphylococcus aureus (strain USA300 / TCH1516).